Here is a 171-residue protein sequence, read N- to C-terminus: uncharacterized protein (171 aa).

In terms of domain architecture, HTH marR-type spans 33 to 166; it reads AISIATNLYR…LTGLLRKVAD (134 aa). The segment at residues 80-103 is a DNA-binding region (H-T-H motif); it reads TRKIAELSGISTATASNVIKTLEK.

This is an uncharacterized protein from Bacillus subtilis (strain 168).